The following is a 376-amino-acid chain: Alanine racemase (376 aa).

Lys40 serves as the catalytic Proton acceptor; specific for D-alanine. Position 40 is an N6-(pyridoxal phosphate)lysine (Lys40). Arg138 lines the substrate pocket. The active-site Proton acceptor; specific for L-alanine is Tyr270. Residue Met317 participates in substrate binding.

Belongs to the alanine racemase family. It depends on pyridoxal 5'-phosphate as a cofactor.

It catalyses the reaction L-alanine = D-alanine. The protein operates within amino-acid biosynthesis; D-alanine biosynthesis; D-alanine from L-alanine: step 1/1. Its function is as follows. Catalyzes the interconversion of L-alanine and D-alanine. May also act on other amino acids. The chain is Alanine racemase (alr) from Lactobacillus gasseri (strain ATCC 33323 / DSM 20243 / BCRC 14619 / CIP 102991 / JCM 1131 / KCTC 3163 / NCIMB 11718 / NCTC 13722 / AM63).